A 104-amino-acid polypeptide reads, in one-letter code: Thioredoxin (104 aa).

The Thioredoxin domain maps to 2–104 (KQVSDASFEE…KLFEWVEASV (103 aa)). A disulfide bond links C29 and C32.

It belongs to the thioredoxin family.

In terms of biological role, participates in various redox reactions through the reversible oxidation of its active center dithiol to a disulfide and catalyzes dithiol-disulfide exchange reactions. In Rhodospirillum rubrum, this protein is Thioredoxin (trxA).